Here is a 634-residue protein sequence, read N- to C-terminus: Nicotinic receptor-associated protein 1 (634 aa).

2 C2 domains span residues 1 to 141 (MNQP…KAHL) and 159 to 295 (KTGS…EILL). Residues Leu29, Asp30, Asp36, Asp105, Asp107, Asp119, Asp189, Asp195, Asp251, Asp253, and Asp271 each contribute to the Ca(2+) site. The VWFA domain occupies 338-557 (DFAVAVDFTA…LDPDVIQENL (220 aa)). The segment at 576–603 (RGFQPRPVDDPWRRDSPPPEFDPILDGT) is disordered. The span at 582–592 (PVDDPWRRDSP) shows a compositional bias: basic and acidic residues.

It belongs to the copine family. Interacts with nicotinic acetylcholine receptor. Requires Ca(2+) as cofactor. Expressed in head and tail neurons, ventral cord moto-neurons, body wall muscles and hypodermal cells of the vulva.

Its subcellular location is the cell membrane. In terms of biological role, exhibits calcium-dependent phospholipid binding properties. May function in membrane trafficking. Regulates synaptic levels of nicotinic acetylcholine receptor subunit lev-1 and unc-38 in the nerve cord. Involved in nicotinic acetylcholine receptor (nAChR)-mediated sensitivity to nicotine and levamisole. Affects directional sperm motility. The protein is Nicotinic receptor-associated protein 1 (nra-1) of Caenorhabditis elegans.